Reading from the N-terminus, the 476-residue chain is Serine--tRNA ligase (476 aa).

Residue 280 to 282 coordinates L-serine; that stretch reads TAE. 311–313 contributes to the ATP binding site; sequence RAE. Residue Glu-334 participates in L-serine binding. Position 401 to 404 (401 to 404) interacts with ATP; that stretch reads EISS. Residue Ser-436 coordinates L-serine.

It belongs to the class-II aminoacyl-tRNA synthetase family. Type-1 seryl-tRNA synthetase subfamily. In terms of assembly, homodimer. The tRNA molecule binds across the dimer.

The protein resides in the cytoplasm. It catalyses the reaction tRNA(Ser) + L-serine + ATP = L-seryl-tRNA(Ser) + AMP + diphosphate + H(+). The enzyme catalyses tRNA(Sec) + L-serine + ATP = L-seryl-tRNA(Sec) + AMP + diphosphate + H(+). Its pathway is aminoacyl-tRNA biosynthesis; selenocysteinyl-tRNA(Sec) biosynthesis; L-seryl-tRNA(Sec) from L-serine and tRNA(Sec): step 1/1. Its function is as follows. Catalyzes the attachment of serine to tRNA(Ser). Is also able to aminoacylate tRNA(Sec) with serine, to form the misacylated tRNA L-seryl-tRNA(Sec), which will be further converted into selenocysteinyl-tRNA(Sec). The protein is Serine--tRNA ligase of Rhodopseudomonas palustris (strain HaA2).